The primary structure comprises 226 residues: 7-cyano-7-deazaguanine synthase (226 aa).

An ATP-binding site is contributed by 8 to 18; the sequence is LSGGLDSTTTL. Residues cysteine 188, cysteine 198, cysteine 201, and cysteine 204 each contribute to the Zn(2+) site.

The protein belongs to the QueC family. Zn(2+) serves as cofactor.

It catalyses the reaction 7-carboxy-7-deazaguanine + NH4(+) + ATP = 7-cyano-7-deazaguanine + ADP + phosphate + H2O + H(+). It functions in the pathway purine metabolism; 7-cyano-7-deazaguanine biosynthesis. In terms of biological role, catalyzes the ATP-dependent conversion of 7-carboxy-7-deazaguanine (CDG) to 7-cyano-7-deazaguanine (preQ(0)). In Nitrosomonas eutropha (strain DSM 101675 / C91 / Nm57), this protein is 7-cyano-7-deazaguanine synthase.